Here is a 268-residue protein sequence, read N- to C-terminus: Cell division coordinator CpoB (268 aa).

The N-terminal stretch at 1–21 (MRMCRRVVTVLALSLPLAAWA) is a signal peptide. Positions 58 to 94 (QLFMQLQQMQDQLSRQQGIIEELQNDVSRMKQENLER) form a coiled coil. Residues 104 to 146 (SGAAPAATPDNSSGGGASNAAPDAAAGAAAQQPAGSSQPGDPA) are disordered. The span at 121 to 143 (SNAAPDAAAGAAAQQPAGSSQPG) shows a compositional bias: low complexity. 3 TPR repeats span residues 149 to 181 (KLYY…YPNS), 185 to 218 (GNAQ…YPKH), and 222 to 255 (PDSL…YPGT).

This sequence belongs to the CpoB family.

It is found in the periplasm. Functionally, mediates coordination of peptidoglycan synthesis and outer membrane constriction during cell division. The protein is Cell division coordinator CpoB of Pseudomonas putida (strain ATCC 47054 / DSM 6125 / CFBP 8728 / NCIMB 11950 / KT2440).